The sequence spans 477 residues: UDP-N-acetylmuramate--L-alanine ligase (477 aa).

Residue 112 to 118 (GTHGKTT) coordinates ATP.

Belongs to the MurCDEF family.

The protein localises to the cytoplasm. The catalysed reaction is UDP-N-acetyl-alpha-D-muramate + L-alanine + ATP = UDP-N-acetyl-alpha-D-muramoyl-L-alanine + ADP + phosphate + H(+). The protein operates within cell wall biogenesis; peptidoglycan biosynthesis. Cell wall formation. This Cupriavidus necator (strain ATCC 17699 / DSM 428 / KCTC 22496 / NCIMB 10442 / H16 / Stanier 337) (Ralstonia eutropha) protein is UDP-N-acetylmuramate--L-alanine ligase.